The chain runs to 153 residues: SsrA-binding protein (153 aa).

The segment at 129 to 153 is disordered; sequence KREDMKKKDQSREMAQALREKSKSH.

The protein belongs to the SmpB family.

Its subcellular location is the cytoplasm. Functionally, required for rescue of stalled ribosomes mediated by trans-translation. Binds to transfer-messenger RNA (tmRNA), required for stable association of tmRNA with ribosomes. tmRNA and SmpB together mimic tRNA shape, replacing the anticodon stem-loop with SmpB. tmRNA is encoded by the ssrA gene; the 2 termini fold to resemble tRNA(Ala) and it encodes a 'tag peptide', a short internal open reading frame. During trans-translation Ala-aminoacylated tmRNA acts like a tRNA, entering the A-site of stalled ribosomes, displacing the stalled mRNA. The ribosome then switches to translate the ORF on the tmRNA; the nascent peptide is terminated with the 'tag peptide' encoded by the tmRNA and targeted for degradation. The ribosome is freed to recommence translation, which seems to be the essential function of trans-translation. This Geobacter sulfurreducens (strain ATCC 51573 / DSM 12127 / PCA) protein is SsrA-binding protein.